A 195-amino-acid polypeptide reads, in one-letter code: uncharacterized protein (195 aa).

Positions 1–11 (MDYIVSPTSSE) are enriched in polar residues. Residues 1 to 118 (MDYIVSPTSS…LDTEGGFVLS (118 aa)) form a disordered region. Residues 35 to 46 (SPEDITDSDEQN) show a composition bias toward acidic residues. A compositionally biased stretch (low complexity) spans 47–63 (DTTTTTSEMSSTSSVPS). The segment covering 82-93 (SDSKLIFDSDNK) has biased composition (basic and acidic residues). Acidic residues predominate over residues 94-110 (DQDDEDDEDDEELEGLD).

This is an uncharacterized protein from Acanthamoeba polyphaga mimivirus (APMV).